Here is a 601-residue protein sequence, read N- to C-terminus: Glutamyl-tRNA(Gln) amidotransferase subunit B, mitochondrial (601 aa).

The N-terminal 52 residues, 1 to 52 (MLQQWLRQSPRAARVLRGSCCRGPQSGSLRHSPLPTAPHRCIRSLQTSATES), are a transit peptide targeting the mitochondrion.

Belongs to the GatB/GatE family. GatB subfamily. Subunit of the heterotrimeric GatCAB amidotransferase (AdT) complex, composed of A, B and C subunits.

The protein localises to the mitochondrion. It carries out the reaction L-glutamyl-tRNA(Gln) + L-glutamine + ATP + H2O = L-glutaminyl-tRNA(Gln) + L-glutamate + ADP + phosphate + H(+). Its function is as follows. Allows the formation of correctly charged Gln-tRNA(Gln) through the transamidation of misacylated Glu-tRNA(Gln) in the mitochondria. The reaction takes place in the presence of glutamine and ATP through an activated gamma-phospho-Glu-tRNA(Gln). The chain is Glutamyl-tRNA(Gln) amidotransferase subunit B, mitochondrial from Aspergillus fumigatus (strain ATCC MYA-4609 / CBS 101355 / FGSC A1100 / Af293) (Neosartorya fumigata).